We begin with the raw amino-acid sequence, 267 residues long: Diphthine--ammonia ligase (267 aa).

A Phosphotyrosine modification is found at tyrosine 97.

It belongs to the Diphthine--ammonia ligase family.

The enzyme catalyses diphthine-[translation elongation factor 2] + NH4(+) + ATP = diphthamide-[translation elongation factor 2] + AMP + diphosphate + H(+). It participates in protein modification; peptidyl-diphthamide biosynthesis. Its function is as follows. Amidase that catalyzes the last step of diphthamide biosynthesis using ammonium and ATP. Diphthamide biosynthesis consists in the conversion of an L-histidine residue in the translation elongation factor eEF-2 (EEF2) to diphthamide. This is Diphthine--ammonia ligase (Dph6) from Rattus norvegicus (Rat).